Consider the following 171-residue polypeptide: 3-hydroxydecanoyl-[acyl-carrier-protein] dehydratase (171 aa).

Residue H71 is part of the active site.

This sequence belongs to the thioester dehydratase family. FabA subfamily. In terms of assembly, homodimer.

The protein localises to the cytoplasm. It carries out the reaction a (3R)-hydroxyacyl-[ACP] = a (2E)-enoyl-[ACP] + H2O. The catalysed reaction is (3R)-hydroxydecanoyl-[ACP] = (2E)-decenoyl-[ACP] + H2O. The enzyme catalyses (2E)-decenoyl-[ACP] = (3Z)-decenoyl-[ACP]. The protein operates within lipid metabolism; fatty acid biosynthesis. Necessary for the introduction of cis unsaturation into fatty acids. Catalyzes the dehydration of (3R)-3-hydroxydecanoyl-ACP to E-(2)-decenoyl-ACP and then its isomerization to Z-(3)-decenoyl-ACP. Can catalyze the dehydratase reaction for beta-hydroxyacyl-ACPs with saturated chain lengths up to 16:0, being most active on intermediate chain length. The sequence is that of 3-hydroxydecanoyl-[acyl-carrier-protein] dehydratase from Sinorhizobium medicae (strain WSM419) (Ensifer medicae).